The chain runs to 362 residues: Erythritol/L-threitol dehydrogenase (362 aa).

Zn(2+)-binding residues include C45, H76, E77, C109, C112, C115, and C123. Positions 195 and 215 each coordinate NAD(+).

The protein belongs to the zinc-containing alcohol dehydrogenase family. Zn(2+) serves as cofactor.

The enzyme catalyses erythritol + NAD(+) = D-erythrulose + NADH + H(+). The catalysed reaction is L-threitol + NAD(+) = L-erythrulose + NADH + H(+). It participates in carbohydrate metabolism; erythritol degradation. Its pathway is carbohydrate metabolism; L-threitol degradation. In terms of biological role, catalyzes the NAD-dependent reversible oxidation of erythritol and L-threitol. Involved in the degradation pathways of erythritol and L-threitol, that allow M.smegmatis to grow on these compounds as the sole carbon source. The chain is Erythritol/L-threitol dehydrogenase from Mycolicibacterium smegmatis (strain ATCC 700084 / mc(2)155) (Mycobacterium smegmatis).